The following is an 87-amino-acid chain: Small ribosomal subunit protein uS19 (87 aa).

Positions 1–29 (MARSLKKGPFVDHHLQKKVDVQNKEGTKK) are disordered. Residues 9-28 (PFVDHHLQKKVDVQNKEGTK) show a composition bias toward basic and acidic residues.

This sequence belongs to the universal ribosomal protein uS19 family.

Functionally, protein S19 forms a complex with S13 that binds strongly to the 16S ribosomal RNA. This Protochlamydia amoebophila (strain UWE25) protein is Small ribosomal subunit protein uS19.